Reading from the N-terminus, the 690-residue chain is Translation factor GUF1, mitochondrial (690 aa).

The tract at residues 40 to 68 is disordered; sequence SVTVPAARRHNSTKSTNSTTSTNSTTATS. The segment covering 52–68 has biased composition (low complexity); that stretch reads TKSTNSTTSTNSTTATS. In terms of domain architecture, tr-type G spans 89-272; that stretch reads ERYRNFCIVA…AVIKKMPAPV (184 aa). Residues 98–105, 165–169, and 219–222 contribute to the GTP site; these read AHIDHGKS, DTPGH, and NKID.

Belongs to the TRAFAC class translation factor GTPase superfamily. Classic translation factor GTPase family. LepA subfamily.

The protein resides in the mitochondrion inner membrane. It catalyses the reaction GTP + H2O = GDP + phosphate + H(+). Promotes mitochondrial protein synthesis. May act as a fidelity factor of the translation reaction, by catalyzing a one-codon backward translocation of tRNAs on improperly translocated ribosomes. Binds to mitochondrial ribosomes in a GTP-dependent manner. The chain is Translation factor GUF1, mitochondrial from Sordaria macrospora (strain ATCC MYA-333 / DSM 997 / K(L3346) / K-hell).